A 256-amino-acid polypeptide reads, in one-letter code: ATP synthase peripheral stalk subunit b, mitochondrial (256 aa).

The transit peptide at 1-42 (MLSRVVLSAAATAASSLKNAAFLGPGVLQATRTFHTGQPHLA) directs the protein to the mitochondrion. An N6-succinyllysine modification is found at Lys131. An N6-acetyllysine mark is found at Lys139, Lys154, Lys162, Lys221, Lys233, and Lys244.

It belongs to the eukaryotic ATPase B chain family. Component of the ATP synthase complex composed at least of ATP5F1A/subunit alpha, ATP5F1B/subunit beta, ATP5MC1/subunit c (homooctomer), MT-ATP6/subunit a, MT-ATP8/subunit 8, ATP5ME/subunit e, ATP5MF/subunit f, ATP5MG/subunit g, ATP5MK/subunit k, ATP5MJ/subunit j, ATP5F1C/subunit gamma, ATP5F1D/subunit delta, ATP5F1E/subunit epsilon, ATP5PF/subunit F6, ATP5PB/subunit b, ATP5PD/subunit d, ATP5PO/subunit OSCP. ATP synthase complex consists of a soluble F(1) head domain (subunits alpha(3) and beta(3)) - the catalytic core - and a membrane F(0) domain - the membrane proton channel (subunits c, a, 8, e, f, g, k and j). These two domains are linked by a central stalk (subunits gamma, delta, and epsilon) rotating inside the F1 region and a stationary peripheral stalk (subunits F6, b, d, and OSCP).

The protein localises to the mitochondrion. It is found in the mitochondrion inner membrane. Its function is as follows. Subunit b, of the mitochondrial membrane ATP synthase complex (F(1)F(0) ATP synthase or Complex V) that produces ATP from ADP in the presence of a proton gradient across the membrane which is generated by electron transport complexes of the respiratory chain. ATP synthase complex consist of a soluble F(1) head domain - the catalytic core - and a membrane F(1) domain - the membrane proton channel. These two domains are linked by a central stalk rotating inside the F(1) region and a stationary peripheral stalk. During catalysis, ATP synthesis in the catalytic domain of F(1) is coupled via a rotary mechanism of the central stalk subunits to proton translocation. In vivo, can only synthesize ATP although its ATP hydrolase activity can be activated artificially in vitro. Part of the complex F(0) domain. Part of the complex F(0) domain and the peripheric stalk, which acts as a stator to hold the catalytic alpha(3)beta(3) subcomplex and subunit a/ATP6 static relative to the rotary elements. This is ATP synthase peripheral stalk subunit b, mitochondrial from Pongo abelii (Sumatran orangutan).